The sequence spans 180 residues: Segregation and condensation protein B (180 aa).

This sequence belongs to the ScpB family. In terms of assembly, homodimer. Homodimerization may be required to stabilize the binding of ScpA to the Smc head domains. Component of a cohesin-like complex composed of ScpA, ScpB and the Smc homodimer, in which ScpA and ScpB bind to the head domain of Smc. The presence of the three proteins is required for the association of the complex with DNA.

Its subcellular location is the cytoplasm. Its function is as follows. Participates in chromosomal partition during cell division. May act via the formation of a condensin-like complex containing Smc and ScpA that pull DNA away from mid-cell into both cell halves. In Staphylococcus epidermidis (strain ATCC 35984 / DSM 28319 / BCRC 17069 / CCUG 31568 / BM 3577 / RP62A), this protein is Segregation and condensation protein B.